A 372-amino-acid polypeptide reads, in one-letter code: Probable dual-specificity RNA methyltransferase RlmN (372 aa).

Catalysis depends on glutamate 106, which acts as the Proton acceptor. The Radical SAM core domain maps to 112–359; the sequence is YPQRNTVCIS…SCTVRDTRGR (248 aa). The cysteines at positions 119 and 365 are disulfide-linked. Positions 126, 130, and 133 each coordinate [4Fe-4S] cluster. Residues 186-187, serine 220, 243-245, and asparagine 322 contribute to the S-adenosyl-L-methionine site; these read GE and SLH. The active-site S-methylcysteine intermediate is the cysteine 365.

The protein belongs to the radical SAM superfamily. RlmN family. [4Fe-4S] cluster serves as cofactor.

It localises to the cytoplasm. The enzyme catalyses adenosine(2503) in 23S rRNA + 2 reduced [2Fe-2S]-[ferredoxin] + 2 S-adenosyl-L-methionine = 2-methyladenosine(2503) in 23S rRNA + 5'-deoxyadenosine + L-methionine + 2 oxidized [2Fe-2S]-[ferredoxin] + S-adenosyl-L-homocysteine. The catalysed reaction is adenosine(37) in tRNA + 2 reduced [2Fe-2S]-[ferredoxin] + 2 S-adenosyl-L-methionine = 2-methyladenosine(37) in tRNA + 5'-deoxyadenosine + L-methionine + 2 oxidized [2Fe-2S]-[ferredoxin] + S-adenosyl-L-homocysteine. Specifically methylates position 2 of adenine 2503 in 23S rRNA and position 2 of adenine 37 in tRNAs. This chain is Probable dual-specificity RNA methyltransferase RlmN, found in Mycolicibacterium smegmatis (strain ATCC 700084 / mc(2)155) (Mycobacterium smegmatis).